The chain runs to 136 residues: Small ribosomal subunit protein uS9 (136 aa).

Residues 97–136 (SPDNRKPLKTEGHLSRDPRAKERRKYGLKKARKAPQFSKR) form a disordered region. The span at 98–116 (PDNRKPLKTEGHLSRDPRA) shows a compositional bias: basic and acidic residues. A compositionally biased stretch (basic residues) spans 117-136 (KERRKYGLKKARKAPQFSKR).

It belongs to the universal ribosomal protein uS9 family.

This Prochlorococcus marinus (strain MIT 9312) protein is Small ribosomal subunit protein uS9.